The following is a 262-amino-acid chain: Apolipoprotein A-I (262 aa).

The signal sequence occupies residues 1 to 18 (MKFLALALTILLAAATQA). Residues 32-63 (VKVAMMEYMAQVKETGQRSIDLLDDTEFKEYK) form a 3 X approximate tandem repeats region. 2 tandem repeats follow at residues 64 to 85 (VQLS…QSLA) and 87 to 107 (YSEA…AEVM). The 10 X approximate tandem repeats stretch occupies residues 64–262 (VQLSQSLDNL…YETISQAMKA (199 aa)). Residues 108–118 (KDVEDVRTQLE) form a 3; half-length repeat. Repeat copies occupy residues 119-140 (PKRA…KKLE), 141-162 (PLIK…VKME), 163-184 (PVVE…AKLM), 185-206 (PIVE…TLAA), and 207-228 (PYAE…EKVG). The 9; half-length repeat unit spans residues 229–239 (PLTNDFKGQVG). Residues 240–262 (PAAEQAKEKLMDFYETISQAMKA) form repeat 10.

Belongs to the apolipoprotein A1/A4/E family.

The protein localises to the secreted. Participates in the reverse transport of cholesterol from tissues to the liver for excretion by promoting cholesterol efflux from tissues and by acting as a cofactor for the lecithin cholesterol acyltransferase (LCAT). The protein is Apolipoprotein A-I (apoa1) of Salmo trutta (Brown trout).